We begin with the raw amino-acid sequence, 591 residues long: Heterogeneous nuclear ribonucleoprotein L-like (591 aa).

Residues 1 to 120 (MSSSSSSSPK…STEGGGSHHK (120 aa)) are disordered. Basic and acidic residues predominate over residues 20-31 (FESQAKRLKTEE). Lysine 28 participates in a covalent cross-link: Glycyl lysine isopeptide (Lys-Gly) (interchain with G-Cter in SUMO2). Serine 37 carries the post-translational modification Phosphoserine. Phosphothreonine is present on threonine 48. Positions 57-73 (SGGGDGGDGDGGSGGGG) are enriched in gly residues. Positions 74-91 (DGEEGEGGEEGDEGDGDE) are enriched in acidic residues. Residues 92–105 (GGSGGDEGGSGGGP) are compositionally biased toward gly residues. A phosphoserine mark is found at serine 107, serine 117, and serine 124. RRM domains are found at residues 125 to 199 (PVVH…YSTS), 215 to 293 (NKVL…YARP), and 384 to 458 (SVVM…VSKQ). Lysine 540 participates in a covalent cross-link: Glycyl lysine isopeptide (Lys-Gly) (interchain with G-Cter in SUMO2).

As to quaternary structure, interacts with HNRNPL.

Its function is as follows. RNA-binding protein that functions as a regulator of alternative splicing for multiple target mRNAs, including PTPRC/CD45 and STAT5A. Required for alternative splicing of PTPRC. In Mus musculus (Mouse), this protein is Heterogeneous nuclear ribonucleoprotein L-like (Hnrnpll).